Here is a 365-residue protein sequence, read N- to C-terminus: Chorismate synthase (365 aa).

R47 contributes to the NADP(+) binding site. FMN is bound by residues 124–126 (RAS), G287, 302–306 (KPTAT), and R328.

Belongs to the chorismate synthase family. Homotetramer. It depends on FMNH2 as a cofactor.

It carries out the reaction 5-O-(1-carboxyvinyl)-3-phosphoshikimate = chorismate + phosphate. The protein operates within metabolic intermediate biosynthesis; chorismate biosynthesis; chorismate from D-erythrose 4-phosphate and phosphoenolpyruvate: step 7/7. In terms of biological role, catalyzes the anti-1,4-elimination of the C-3 phosphate and the C-6 proR hydrogen from 5-enolpyruvylshikimate-3-phosphate (EPSP) to yield chorismate, which is the branch point compound that serves as the starting substrate for the three terminal pathways of aromatic amino acid biosynthesis. This reaction introduces a second double bond into the aromatic ring system. This chain is Chorismate synthase, found in Prochlorococcus marinus (strain AS9601).